Reading from the N-terminus, the 307-residue chain is Plastid division protein PDV2 (307 aa).

At M1 the chain carries N-acetylmethionine. At 1–213 (MEDEEGIGLI…SGGSSHGVIR (213 aa)) the chain is on the cytoplasmic side. The segment at 28–66 (SSTTVSDNGDGNEDLSPGEGRKSEIIGNQDKDFDSISSE) is disordered. Residues 46-61 (EGRKSEIIGNQDKDFD) show a composition bias toward basic and acidic residues. At S50 the chain carries Phosphoserine. The stretch at 76–103 (LLRIRDALEALESQLASLQNLRQRQQYE) forms a coiled coil. Residues 174–206 (HLPSKKKSDANGFGSGHVRNEAEAKSPNGGSGG) form a disordered region. Residues 214-234 (FLGSVAKIVLPIIGVISLLSA) traverse the membrane as a helical segment. Topologically, residues 235 to 307 (SGYGPEMRKR…AKRDVTYGYG (73 aa)) are chloroplast intermembrane. Positions 235–307 (SGYGPEMRKR…AKRDVTYGYG (73 aa)) are ARC6 binding.

As to quaternary structure, interacts (via C-terminus) with ARC6 (via C-terminus) in the chloroplast intermembrane space; this interaction induces ARC6 homodimerization and leads to the formation of a heterotetramer containing two ARC6 and two PDV2 subunits. Interacts with ARC5/DRP5B. In terms of tissue distribution, mostly expressed in young leaves.

The protein localises to the plastid. It localises to the chloroplast outer membrane. Functionally, component of the plastid division machinery consisting in a binary fission accomplished by the simultaneous constriction of the FtsZ ring on the stromal side of the inner envelope membrane, and the ARC5/DRP5B ring on the cytosolic side of the outer envelope membrane. Positive factor of chloroplast division required, with a dosage effect, to mediate the recruitment and dimerization of ARC5/DRP5B at the midplastid constriction site in the cytoplasm at plastid outer envelope membranes (OEMs). Prevents ARC5/DRP5B GTPase acrivity. Relays plastid division site position between stroma and outer surface via interactions with the cytoplasmic ARC5/DRP5B and the inner membrane ARC6 that recruits stromal FtsZ ring. Binding to phosphatidylinositol 4-phosphate (PI4P) modulates negatively chloroplast division. The protein is Plastid division protein PDV2 of Arabidopsis thaliana (Mouse-ear cress).